Reading from the N-terminus, the 199-residue chain is Imidazole glycerol phosphate synthase subunit HisH (199 aa).

Positions 1–199 (MTVVVDYEMG…QILKNLREML (199 aa)) constitute a Glutamine amidotransferase type-1 domain. C79 (nucleophile) is an active-site residue. Residues H180 and E182 contribute to the active site.

Heterodimer of HisH and HisF.

It is found in the cytoplasm. The catalysed reaction is 5-[(5-phospho-1-deoxy-D-ribulos-1-ylimino)methylamino]-1-(5-phospho-beta-D-ribosyl)imidazole-4-carboxamide + L-glutamine = D-erythro-1-(imidazol-4-yl)glycerol 3-phosphate + 5-amino-1-(5-phospho-beta-D-ribosyl)imidazole-4-carboxamide + L-glutamate + H(+). It catalyses the reaction L-glutamine + H2O = L-glutamate + NH4(+). The protein operates within amino-acid biosynthesis; L-histidine biosynthesis; L-histidine from 5-phospho-alpha-D-ribose 1-diphosphate: step 5/9. IGPS catalyzes the conversion of PRFAR and glutamine to IGP, AICAR and glutamate. The HisH subunit catalyzes the hydrolysis of glutamine to glutamate and ammonia as part of the synthesis of IGP and AICAR. The resulting ammonia molecule is channeled to the active site of HisF. The chain is Imidazole glycerol phosphate synthase subunit HisH from Carboxydothermus hydrogenoformans (strain ATCC BAA-161 / DSM 6008 / Z-2901).